The chain runs to 567 residues: Type 2 DNA topoisomerase 6 subunit B (567 aa).

ATP-binding positions include Asn46, Asp78, 99–100, 109–116, and Lys472; these read TK and GQQGIGIS.

The protein belongs to the TOP6B family. Homodimer. Heterotetramer of two Top6A and two Top6B chains.

It carries out the reaction ATP-dependent breakage, passage and rejoining of double-stranded DNA.. Functionally, relaxes both positive and negative superturns and exhibits a strong decatenase activity. The sequence is that of Type 2 DNA topoisomerase 6 subunit B from Thermococcus kodakarensis (strain ATCC BAA-918 / JCM 12380 / KOD1) (Pyrococcus kodakaraensis (strain KOD1)).